The chain runs to 414 residues: Protein PHLOEM PROTEIN 2-LIKE A10 (414 aa).

2 helical membrane passes run 20–40 (WLIF…VYHL) and 379–399 (YVGA…LHII).

Its subcellular location is the membrane. The chain is Protein PHLOEM PROTEIN 2-LIKE A10 (PP2A10) from Arabidopsis thaliana (Mouse-ear cress).